Reading from the N-terminus, the 593-residue chain is Mono(ADP-ribosyl)transferase SpvB (593 aa).

Positions 361–384 (PVNNMMPPPPPPPPPMMGGNSSRP) are disordered. A compositionally biased stretch (pro residues) spans 366–376 (MPPPPPPPPPM). Positions 375-578 (PMMGGNSSRP…LRLSDDATAD (204 aa)) constitute a TR mART core domain. Residues Arg473, Ser503, and Glu540 contribute to the active site.

This sequence belongs to the SpvB family.

The protein resides in the secreted. It carries out the reaction L-arginyl-[protein] + NAD(+) = N(omega)-(ADP-D-ribosyl)-L-arginyl-[protein] + nicotinamide + H(+). Its function is as follows. Mono-ADP-ribosylates muscle and non-muscle actin. ADP-ribosylates Chinese hamster ovary and HeLa cell actin as well as rabbit muscle, porcine heart actin and non-muscle beta- and gamma-actin. ADP-ribosylation of actin prevents the polymerization of G actin to F actin, causing actin filament depolymerization, destruction of the cytoskeleton and cytotoxicity; this requires only the C-terminal 120 residues. Does not possess NAD(+)-glycohydrolase activity, unlike most mART enzymes. In Salmonella dublin, this protein is Mono(ADP-ribosyl)transferase SpvB (spvB).